A 237-amino-acid chain; its full sequence is Protein FEV (237 aa).

Residues 47-127 constitute a DNA-binding region (ETS); that stretch reads IQLWQFLLEL…HGKRYAYRFD (81 aa). The tract at residues 129-237 is may mediate active transcriptional repression; that stretch reads QGLAQACQPP…AASHLGGHYH (109 aa).

The protein belongs to the ETS family. As to expression, expressed in central serotonergic neurons.

The protein resides in the nucleus. In terms of biological role, functions as a transcriptional regulator. May function as a transcriptional repressor. Functions in the differentiation and the maintenance of the central serotonergic neurons. May play a role in cell growth. This Mus musculus (Mouse) protein is Protein FEV (Fev).